Consider the following 207-residue polypeptide: Large ribosomal subunit protein uL4 (207 aa).

The interval 49-78 (HAVKNRSAVSGGGRKPWRQKGTGRARQGSI) is disordered.

It belongs to the universal ribosomal protein uL4 family. As to quaternary structure, part of the 50S ribosomal subunit.

One of the primary rRNA binding proteins, this protein initially binds near the 5'-end of the 23S rRNA. It is important during the early stages of 50S assembly. It makes multiple contacts with different domains of the 23S rRNA in the assembled 50S subunit and ribosome. Functionally, forms part of the polypeptide exit tunnel. The protein is Large ribosomal subunit protein uL4 of Streptococcus equi subsp. zooepidemicus (strain MGCS10565).